Consider the following 753-residue polypeptide: 5-methyltetrahydropteroyltriglutamate--homocysteine methyltransferase (753 aa).

Residues 17 to 20 (RELK) and Lys117 contribute to the 5-methyltetrahydropteroyltri-L-glutamate site. Residues 431 to 433 (IGS) and Glu484 contribute to the L-homocysteine site. Residues 431–433 (IGS) and Glu484 contribute to the L-methionine site. 5-methyltetrahydropteroyltri-L-glutamate contacts are provided by residues 515–516 (RC) and Trp561. Asp599 provides a ligand contact to L-homocysteine. Residue Asp599 coordinates L-methionine. Glu605 serves as a coordination point for 5-methyltetrahydropteroyltri-L-glutamate. The Zn(2+) site is built by His641, Cys643, and Glu665. The active-site Proton donor is His694. Cys726 lines the Zn(2+) pocket.

This sequence belongs to the vitamin-B12 independent methionine synthase family. As to quaternary structure, monomer. It depends on Zn(2+) as a cofactor.

It carries out the reaction 5-methyltetrahydropteroyltri-L-glutamate + L-homocysteine = tetrahydropteroyltri-L-glutamate + L-methionine. It participates in amino-acid biosynthesis; L-methionine biosynthesis via de novo pathway; L-methionine from L-homocysteine (MetE route): step 1/1. In terms of biological role, catalyzes the transfer of a methyl group from 5-methyltetrahydrofolate to homocysteine resulting in methionine formation. The polypeptide is 5-methyltetrahydropteroyltriglutamate--homocysteine methyltransferase (Escherichia coli (strain K12)).